We begin with the raw amino-acid sequence, 247 residues long: MSEATTTLDGWYCLHDLRSIDWAAWKTLSSDERGQAVSEFLNVVEKWNDVAATKKGSHAMYTVVGQKADIMLMILRPTMEELNEIETELNKTTLAEYMVPAYSYVSVVELSNYLPADEDPYQNPQILARLYPELPKANHICFYPMDKRRQGDDNWYMLPMEERKKMMYSHSKIGRQYAGKVRQVISGSVGFDDFEWGVTLFADDVLQFKKLIYEMRFDEVSARYGEFGTFFVGNILPDEKVEKFLHI.

Fe-coproporphyrin III is bound by residues arginine 129, 143-147 (YPMDK), histidine 170, glutamine 183, and serine 221. Tyrosine 143 is a catalytic residue.

This sequence belongs to the ChdC family. Type 1 subfamily. The cofactor is Fe-coproporphyrin III.

The catalysed reaction is Fe-coproporphyrin III + 2 H2O2 + 2 H(+) = heme b + 2 CO2 + 4 H2O. The enzyme catalyses Fe-coproporphyrin III + H2O2 + H(+) = harderoheme III + CO2 + 2 H2O. It carries out the reaction harderoheme III + H2O2 + H(+) = heme b + CO2 + 2 H2O. It functions in the pathway porphyrin-containing compound metabolism; protoheme biosynthesis. In terms of biological role, involved in coproporphyrin-dependent heme b biosynthesis. Catalyzes the decarboxylation of Fe-coproporphyrin III (coproheme) to heme b (protoheme IX), the last step of the pathway. The reaction occurs in a stepwise manner with a three-propionate intermediate. This Bacillus cereus (strain ATCC 10987 / NRS 248) protein is Coproheme decarboxylase.